A 388-amino-acid chain; its full sequence is Autophagy-related protein 21 (388 aa).

2 WD repeats span residues Cys179–Glu219 and Ser224–Ser263. The L/FRRG motif motif lies at Phe220–Ser224.

This sequence belongs to the WD repeat PROPPIN family.

The protein localises to the cytoplasm. It localises to the membrane. It is found in the vacuole membrane. Functionally, involved in peroxisome sequestration to the vacuole during macropexophagy. Also required for microautophagy. In Pichia angusta (Yeast), this protein is Autophagy-related protein 21 (ATG21).